Consider the following 155-residue polypeptide: 6,7-dimethyl-8-ribityllumazine synthase (155 aa).

5-amino-6-(D-ribitylamino)uracil contacts are provided by residues Trp-22, 56–58, and 80–82; these read SFE and AVI. Residue 85–86 participates in (2S)-2-hydroxy-3-oxobutyl phosphate binding; it reads AT. The Proton donor role is filled by His-88. A 5-amino-6-(D-ribitylamino)uracil-binding site is contributed by Phe-113. Arg-127 lines the (2S)-2-hydroxy-3-oxobutyl phosphate pocket.

Belongs to the DMRL synthase family.

It catalyses the reaction (2S)-2-hydroxy-3-oxobutyl phosphate + 5-amino-6-(D-ribitylamino)uracil = 6,7-dimethyl-8-(1-D-ribityl)lumazine + phosphate + 2 H2O + H(+). The protein operates within cofactor biosynthesis; riboflavin biosynthesis; riboflavin from 2-hydroxy-3-oxobutyl phosphate and 5-amino-6-(D-ribitylamino)uracil: step 1/2. Functionally, catalyzes the formation of 6,7-dimethyl-8-ribityllumazine by condensation of 5-amino-6-(D-ribitylamino)uracil with 3,4-dihydroxy-2-butanone 4-phosphate. This is the penultimate step in the biosynthesis of riboflavin. This is 6,7-dimethyl-8-ribityllumazine synthase from Chloroflexus aurantiacus (strain ATCC 29364 / DSM 637 / Y-400-fl).